Consider the following 451-residue polypeptide: UDP-N-acetylmuramoylalanine--D-glutamate ligase (451 aa).

Position 119 to 125 (119 to 125 (GSNGKTT)) interacts with ATP.

This sequence belongs to the MurCDEF family.

The protein resides in the cytoplasm. It catalyses the reaction UDP-N-acetyl-alpha-D-muramoyl-L-alanine + D-glutamate + ATP = UDP-N-acetyl-alpha-D-muramoyl-L-alanyl-D-glutamate + ADP + phosphate + H(+). The protein operates within cell wall biogenesis; peptidoglycan biosynthesis. In terms of biological role, cell wall formation. Catalyzes the addition of glutamate to the nucleotide precursor UDP-N-acetylmuramoyl-L-alanine (UMA). The chain is UDP-N-acetylmuramoylalanine--D-glutamate ligase from Streptococcus agalactiae serotype Ia (strain ATCC 27591 / A909 / CDC SS700).